Here is a 997-residue protein sequence, read N- to C-terminus: RNA2 polyprotein (997 aa).

The segment at 370-376 (KVVSVKG) is involved in tubule formation by the movement protein.

As to quaternary structure, interacts with the large capsid protein. Interacts with the small capsid protein. Homomultimer; assembles as pentons. Interacts with the movement protein (via C-terminus). In terms of assembly, interacts (via C-terminus) with the large capsid protein. In terms of processing, specific enzymatic cleavages by picornain 3C-like protease in vivo yield mature proteins.

It is found in the host cell junction. The protein resides in the host plasmodesma. It localises to the virion. Its function is as follows. Responsible for viral RNA2 accumulation. May function by recruiting the RNA1-encoded polyprotein that contains the replication protein to RNA2 and enable its replication. Functionally, transports the viral genome to neighboring plant cells directly through plasmosdesmata, without any budding. The movement protein allows efficient cell to cell propagation, by bypassing the host cell wall barrier. Acts by forming a tubular structure at the host plasmodesmata, enlarging it enough to allow free passage of virion capsids. Binds to GTP and to single-stranded RNA and single-stranded DNA in a non-sequence-specific manner. Together with the small capsid protein, forms an icosahedral capsid (T=3) enclosing the viral positive strand RNA genome, with a diameter of approximately 300 Angstroms. The capsid is formed from 60 copies each of the large and the small capsid protein. The large capsid protein interacts with the viral RNA. In terms of biological role, together with the large capsid protein, forms an icosahedral capsid (T=3) enclosing the viral positive strand RNA genome, with a diameter of approximately 300 Angstroms. The capsid is formed from 60 copies each of the large and the small capsid protein. The small capsid protein forms the turrets at the fivefold axes of the viral particle. Also seems to act as suppressor of post-transcriptional gene silencing (PTGS), a mechanism of plant viral defense that limits the accumulation of viral RNAs. The chain is RNA2 polyprotein from Andean potato mottle virus (APMV).